A 548-amino-acid chain; its full sequence is Membrane protein insertase YidC (548 aa).

Residues 6–26 (NLLVIALLFVSFMIWQAWEQD) traverse the membrane as a helical segment. The tract at residues 28–55 (NPQPQAQQTTQTTTTAAGSAADQGVPAS) is disordered. Residues 30–50 (QPQAQQTTQTTTTAAGSAADQ) are compositionally biased toward low complexity. The next 4 helical transmembrane spans lie at 350–370 (FVGN…GIMY), 420–440 (LGGC…YYML), 458–478 (LSAQ…MFFI), and 499–519 (PVIF…YYIV).

It belongs to the OXA1/ALB3/YidC family. Type 1 subfamily. Interacts with the Sec translocase complex via SecD. Specifically interacts with transmembrane segments of nascent integral membrane proteins during membrane integration.

It is found in the cell inner membrane. Functionally, required for the insertion and/or proper folding and/or complex formation of integral membrane proteins into the membrane. Involved in integration of membrane proteins that insert both dependently and independently of the Sec translocase complex, as well as at least some lipoproteins. Aids folding of multispanning membrane proteins. In Shigella boydii serotype 18 (strain CDC 3083-94 / BS512), this protein is Membrane protein insertase YidC.